The chain runs to 274 residues: 4-deoxy-L-threo-5-hexosulose-uronate ketol-isomerase (274 aa).

Zn(2+)-binding residues include His-192, His-194, Glu-199, and His-241.

It belongs to the KduI family. It depends on Zn(2+) as a cofactor.

The enzyme catalyses 5-dehydro-4-deoxy-D-glucuronate = 3-deoxy-D-glycero-2,5-hexodiulosonate. The protein operates within glycan metabolism; pectin degradation; 2-dehydro-3-deoxy-D-gluconate from pectin: step 4/5. In terms of biological role, catalyzes the isomerization of 5-dehydro-4-deoxy-D-glucuronate to 3-deoxy-D-glycero-2,5-hexodiulosonate. This Cereibacter sphaeroides (strain ATCC 17029 / ATH 2.4.9) (Rhodobacter sphaeroides) protein is 4-deoxy-L-threo-5-hexosulose-uronate ketol-isomerase.